The sequence spans 1142 residues: Auxin response factor 5 (1142 aa).

The TF-B3 DNA-binding region spans 148 to 250 (FCKTLTASDT…QLLLGIRRAN (103 aa)). Residues 1009–1093 (RTFTKVYKRG…RCIRILSPQE (85 aa)) form the PB1 domain. The disordered stretch occupies residues 1114–1142 (SSSDGVNGWRPRCDQNPGNPSIGPYDQFE).

The protein belongs to the ARF family. In terms of assembly, homodimers and heterodimers. Expressed in roots, culms, leaves and young panicles.

It is found in the nucleus. In terms of biological role, auxin response factors (ARFs) are transcriptional factors that bind specifically to the DNA sequence 5'-TGTCTC-3' found in the auxin-responsive promoter elements (AuxREs). The protein is Auxin response factor 5 (ARF5) of Oryza sativa subsp. japonica (Rice).